A 167-amino-acid polypeptide reads, in one-letter code: U-scoloptoxin-Er5c (167 aa).

The N-terminal stretch at 1–22 (MKTNCEFPLLCLLIVLVANVEG) is a signal peptide. Residues 23 to 94 (EVEDTGLKMV…KRLWRNWERR (72 aa)) constitute a propeptide that is removed on maturation. 3 RLWRNWE repeats span residues 34 to 40 (RLWRNWE), 61 to 67 (RLWRNWE), and 86 to 92 (RLWRNWE). Position 95 is a pyrrolidone carboxylic acid (Gln-95). The RLWRNWE 4; approximate repeat unit spans residues 107-113 (ELWRNWE). Residues 112–118 (WEDLKRR) constitute a propeptide that is removed on maturation. A Pyrrolidone carboxylic acid modification is found at Gln-119. An RLWRNWE 5 repeat occupies 134–140 (RLWRNWE). Positions 139–167 (WEDNHATLRKRSADSLSRQKRLGRERGKE) are excised as a propeptide. The tract at residues 147–167 (RKRSADSLSRQKRLGRERGKE) is disordered.

It belongs to the scoloptoxin-08 family. In terms of tissue distribution, expressed by the venom gland.

Its subcellular location is the secreted. The polypeptide is U-scoloptoxin-Er5c (Ethmostigmus rubripes (Giant centipede)).